A 559-amino-acid polypeptide reads, in one-letter code: Nuclear envelope integral membrane protein (559 aa).

The first 15 residues, 1 to 15, serve as a signal peptide directing secretion; the sequence is MRLLTLALLVAGSLA. N-linked (GlcNAc...) asparagine glycosylation is found at N67, N81, and N114. A run of 5 helical transmembrane segments spans residues 164–184, 192–212, 218–238, 267–287, and 290–310; these read YTSG…FIVW, IGVP…HFAW, IMIE…LISM, LIYF…ALII, and ICRG…KAVW. N408 and N465 each carry an N-linked (GlcNAc...) asparagine glycan. Disordered regions lie at residues 475-494 and 510-559; these read RRDS…PRMP and KNGR…DADE. Residues 517–526 show a composition bias toward polar residues; the sequence is PSSSTASGMT. The segment covering 530–539 has biased composition (basic and acidic residues); sequence YMRKARRIDA.

It belongs to the NEMP family.

The protein resides in the nucleus inner membrane. In terms of biological role, contributes to nuclear envelope stiffness in germ cells. Required for fertility. The sequence is that of Nuclear envelope integral membrane protein from Caenorhabditis elegans.